The following is a 328-amino-acid chain: 3-dehydroquinate synthase (328 aa).

The protein belongs to the archaeal-type DHQ synthase family.

It catalyses the reaction 2-amino-2,3,7-trideoxy-D-lyxo-hept-6-ulosonate + NAD(+) + H2O = 3-dehydroquinate + NH4(+) + NADH + H(+). Functionally, catalyzes the oxidative deamination and cyclization of 2-amino-3,7-dideoxy-D-threo-hept-6-ulosonic acid (ADH) to yield 3-dehydroquinate (DHQ), which is fed into the canonical shikimic pathway of aromatic amino acid biosynthesis. In Methanoculleus marisnigri (strain ATCC 35101 / DSM 1498 / JR1), this protein is 3-dehydroquinate synthase.